The chain runs to 78 residues: Translation initiation factor IF-1 (78 aa).

Residues 2–78 (SKNNLNETES…TQARITYRFK (77 aa)) enclose the S1-like domain.

This sequence belongs to the IF-1 family. In terms of assembly, component of the 30S ribosomal translation pre-initiation complex which assembles on the 30S ribosome in the order IF-2 and IF-3, IF-1 and N-formylmethionyl-tRNA(fMet); mRNA recruitment can occur at any time during PIC assembly.

The protein localises to the cytoplasm. Its function is as follows. One of the essential components for the initiation of protein synthesis. Stabilizes the binding of IF-2 and IF-3 on the 30S subunit to which N-formylmethionyl-tRNA(fMet) subsequently binds. Helps modulate mRNA selection, yielding the 30S pre-initiation complex (PIC). Upon addition of the 50S ribosomal subunit IF-1, IF-2 and IF-3 are released leaving the mature 70S translation initiation complex. This is Translation initiation factor IF-1 from Aster yellows witches'-broom phytoplasma (strain AYWB).